A 266-amino-acid chain; its full sequence is Hydroxyethylthiazole kinase (266 aa).

Residue Met45 participates in substrate binding. Residues Lys121 and Ser167 each contribute to the ATP site. Gly194 provides a ligand contact to substrate.

Belongs to the Thz kinase family. The cofactor is Mg(2+).

It catalyses the reaction 5-(2-hydroxyethyl)-4-methylthiazole + ATP = 4-methyl-5-(2-phosphooxyethyl)-thiazole + ADP + H(+). It participates in cofactor biosynthesis; thiamine diphosphate biosynthesis; 4-methyl-5-(2-phosphoethyl)-thiazole from 5-(2-hydroxyethyl)-4-methylthiazole: step 1/1. Functionally, catalyzes the phosphorylation of the hydroxyl group of 4-methyl-5-beta-hydroxyethylthiazole (THZ). The polypeptide is Hydroxyethylthiazole kinase (Methanocella arvoryzae (strain DSM 22066 / NBRC 105507 / MRE50)).